A 314-amino-acid polypeptide reads, in one-letter code: Olfactory receptor 5I1 (314 aa).

The Extracellular portion of the chain corresponds to Met-1–Ile-27. An N-linked (GlcNAc...) asparagine glycan is attached at Asn-7. A helical membrane pass occupies residues Val-28 to Met-48. Topologically, residues Leu-49–His-56 are cytoplasmic. Residues Leu-57 to Ser-77 traverse the membrane as a helical segment. Residues Asp-78 to Leu-101 lie on the Extracellular side of the membrane. Cys-99 and Cys-191 are disulfide-bonded. A helical membrane pass occupies residues Gln-102–Tyr-122. Residues Asp-123–Gly-141 are Cytoplasmic-facing. The helical transmembrane segment at Ile-142–Thr-162 threads the bilayer. At Ser-163–Glu-198 the chain is on the extracellular side. The chain crosses the membrane as a helical span at residues Trp-199–Ser-219. Residues Tyr-220–Thr-239 are Cytoplasmic-facing. A helical membrane pass occupies residues Phe-240–Ile-260. Over Tyr-261–Asp-273 the chain is Extracellular. The chain crosses the membrane as a helical span at residues Lys-274–Leu-294. Topologically, residues Arg-295–Ser-314 are cytoplasmic.

The protein belongs to the G-protein coupled receptor 1 family.

It localises to the cell membrane. Odorant receptor. The sequence is that of Olfactory receptor 5I1 (OR5I1) from Homo sapiens (Human).